The sequence spans 220 residues: Tumor protein D54 (220 aa).

M1 is modified (N-acetylmethionine). The span at 1 to 14 shows a compositional bias: polar residues; the sequence is MDSASQDINLNSPN. Residues 1–26 form a disordered region; the sequence is MDSASQDINLNSPNKGVLSDFMTDVP. 3 positions are modified to phosphoserine: S3, S12, and S19. The stretch at 40–82 forms a coiled coil; it reads GLTEVEEEELRAELAKVEEEIVTLRQVLAAKERHCGELKRRLG. A phosphoserine mark is found at S96, S149, S168, and S175. T177 bears the Phosphothreonine mark. S180 is subject to Phosphoserine. T187 is modified (phosphothreonine). The interval 189 to 220 is disordered; that stretch reads KSKVVGGRENGSDTLPSSPGSGDQTLPDHAPF. Residues 200–212 show a composition bias toward polar residues; sequence SDTLPSSPGSGDQ. Residues S206 and S209 each carry the phosphoserine modification.

This sequence belongs to the TPD52 family. As to quaternary structure, forms a homodimer or heterodimer with other members of the family. Interacts with MAL2.

The sequence is that of Tumor protein D54 (Tpd52l2) from Rattus norvegicus (Rat).